The following is a 303-amino-acid chain: Heme A synthase (303 aa).

Residues 1-8 (MFGKKNLK) lie on the Cytoplasmic side of the membrane. Residues 9-29 (WLGVVATLMMTFVQLGGALVT) traverse the membrane as a helical segment. The Extracellular segment spans residues 30–67 (KTGSADGCGSSWPLCHGALIPEFFPIDTIIELSHRAVS). A disulfide bond links Cys-37 and Cys-44. Residue Glu-60 is part of the active site. His-63 provides a ligand contact to heme o. The helical transmembrane segment at 68–88 (ALSLLMVLWLVITAWKHIGYI) threads the bilayer. The Cytoplasmic segment spans residues 89–93 (KEIKP). Residues 94–114 (LSIISVGFLLLQALIGAAAVI) traverse the membrane as a helical segment. Over 115 to 125 (WQQNDYVLALH) the chain is Extracellular. Position 125 (His-125) interacts with heme o. Residues 126 to 146 (FGISLISFSSVFLITLIIFSI) traverse the membrane as a helical segment. At 147–163 (DQKYEADELYIKKPLRR) the chain is on the cytoplasmic side. Residues 164 to 184 (LTWLMAIIIYCGVYTGALVRH) form a helical membrane-spanning segment. Residues 185–215 (ADASLAYGGWPLPFHDLVPHSEQDWVQLTHR) are Extracellular-facing. Heme b is bound at residue His-214. The chain crosses the membrane as a helical span at residues 216–236 (IMAFIVFTIIMITYIHAVKNY). The Cytoplasmic segment spans residues 237 to 244 (PNNRTVHY). Residues 245–265 (GYTAAFILVILQVITGALSIM) form a helical membrane-spanning segment. Over 266–270 (TNVNL) the chain is Extracellular. A helical transmembrane segment spans residues 271-291 (IIALFHALFITYLFGMTTYFI). His-276 is a binding site for heme b. The Cytoplasmic portion of the chain corresponds to 292-303 (MLMLRSVRSDKQ).

The protein belongs to the COX15/CtaA family. Type 1 subfamily. Interacts with CtaB. It depends on heme b as a cofactor.

Its subcellular location is the cell membrane. The enzyme catalyses Fe(II)-heme o + 2 A + H2O = Fe(II)-heme a + 2 AH2. It participates in porphyrin-containing compound metabolism; heme A biosynthesis; heme A from heme O: step 1/1. Catalyzes the conversion of heme O to heme A by two successive hydroxylations of the methyl group at C8. The first hydroxylation forms heme I, the second hydroxylation results in an unstable dihydroxymethyl group, which spontaneously dehydrates, resulting in the formyl group of heme A. In Staphylococcus aureus (strain Mu3 / ATCC 700698), this protein is Heme A synthase.